The following is a 470-amino-acid chain: Putative multidrug resistance protein MdtD (470 aa).

The Periplasmic segment spans residues 1–11 (MTELPDNTRWQ). A helical membrane pass occupies residues 12–32 (LWIVAFGFFMQSLDTTIVNTA). Residues 33 to 48 (LPSMAKSLGESPLHMH) are Cytoplasmic-facing. A helical transmembrane segment spans residues 49-69 (MVVVSYVLTVAVMLPASGWLA). Residues 70–76 (DKIGVRN) lie on the Periplasmic side of the membrane. Residues 77–97 (IFFAAIVLFTLGSLFCALSGT) form a helical membrane-spanning segment. The Cytoplasmic portion of the chain corresponds to 98–101 (LNQL). Residues 102–124 (VLARVLQGVGGAMMVPVGRLTVM) form a helical membrane-spanning segment. The Periplasmic portion of the chain corresponds to 125 to 137 (KIVPRAQYMAAMT). Residues 138 to 158 (FVTLPGQIGPLLGPALGGVLV) traverse the membrane as a helical segment. The Cytoplasmic portion of the chain corresponds to 159–164 (EYASWH). The helical transmembrane segment at 165 to 185 (WIFLINIPVGIVGAMATFMLM) threads the bilayer. The Periplasmic portion of the chain corresponds to 186 to 196 (PNYIIETRRFD). A helical transmembrane segment spans residues 197–217 (LPGFLLLAIGMAVLTLALDGS). Residues 218–224 (KSMGISP) are Cytoplasmic-facing. Residues 225–245 (WTLAGLAAGGAAAILLYLFHA) traverse the membrane as a helical segment. The Periplasmic segment spans residues 246–262 (KKNSGALFSLRLFRTPT). The helical transmembrane segment at 263–283 (FSLGLLGSFAGRIGSGMLPFM) threads the bilayer. The Cytoplasmic segment spans residues 284–285 (TP). A helical transmembrane segment spans residues 286 to 306 (VFLQIGLGFSPFHAGLMMIPM). Residues 307-341 (VLGSMGMKRIVVQIVNRFGYRRVLVATTLGLALVS) lie on the Periplasmic side of the membrane. Residues 342–362 (LLFMSVALLGWYYLLPLVLLL) form a helical membrane-spanning segment. The Cytoplasmic segment spans residues 363-395 (QGMVNSARFSSMNTLTLKDLPDTLASSGNSLLS). A helical membrane pass occupies residues 396 to 416 (MIMQLSMSIGVTIAGMLLGMF). Topologically, residues 417–430 (GQQHIGIDSSATHH) are periplasmic. Residues 431-451 (VFMYTWLCMAVIIALPAIIFA) form a helical membrane-spanning segment. The Cytoplasmic segment spans residues 452-470 (RVPNDTQQNMVISRRKRSL).

It belongs to the major facilitator superfamily. TCR/Tet family.

The protein localises to the cell inner membrane. The protein is Putative multidrug resistance protein MdtD of Salmonella typhimurium (strain LT2 / SGSC1412 / ATCC 700720).